We begin with the raw amino-acid sequence, 209 residues long: Ribosomal RNA large subunit methyltransferase E (209 aa).

Residues Gly-63, Trp-65, Asp-83, Asp-99, and Asp-124 each contribute to the S-adenosyl-L-methionine site. Lys-164 functions as the Proton acceptor in the catalytic mechanism.

It belongs to the class I-like SAM-binding methyltransferase superfamily. RNA methyltransferase RlmE family.

The protein resides in the cytoplasm. It carries out the reaction uridine(2552) in 23S rRNA + S-adenosyl-L-methionine = 2'-O-methyluridine(2552) in 23S rRNA + S-adenosyl-L-homocysteine + H(+). Functionally, specifically methylates the uridine in position 2552 of 23S rRNA at the 2'-O position of the ribose in the fully assembled 50S ribosomal subunit. In Sodalis glossinidius (strain morsitans), this protein is Ribosomal RNA large subunit methyltransferase E.